Here is a 336-residue protein sequence, read N- to C-terminus: Phosphoribosylformylglycinamidine cyclo-ligase (336 aa).

The protein belongs to the AIR synthase family.

Its subcellular location is the cytoplasm. It carries out the reaction 2-formamido-N(1)-(5-O-phospho-beta-D-ribosyl)acetamidine + ATP = 5-amino-1-(5-phospho-beta-D-ribosyl)imidazole + ADP + phosphate + H(+). It functions in the pathway purine metabolism; IMP biosynthesis via de novo pathway; 5-amino-1-(5-phospho-D-ribosyl)imidazole from N(2)-formyl-N(1)-(5-phospho-D-ribosyl)glycinamide: step 2/2. The polypeptide is Phosphoribosylformylglycinamidine cyclo-ligase (Thermoanaerobacter pseudethanolicus (strain ATCC 33223 / 39E) (Clostridium thermohydrosulfuricum)).